Here is a 334-residue protein sequence, read N- to C-terminus: Chitinase 9 (334 aa).

The first 23 residues, 1–23 (MKATTTAVALLVAAAAMAAQVVA), serve as a signal peptide directing secretion. The Chitin-binding type-1 domain maps to 24 to 64 (EQCGSQAGGALCPNCLCCSSYGWCGSTSDYCGDGCQSQCDG). Intrachain disulfides connect Cys26–Cys41, Cys35–Cys47, Cys38–Cys65, Cys40–Cys54, Cys58–Cys62, Cys107–Cys169, Cys181–Cys189, and Cys288–Cys320. The active-site Proton donor is the Glu151.

It belongs to the glycosyl hydrolase 19 family. Chitinase class I subfamily. Expressed at high levels in roots, sheaths and meristems.

It catalyses the reaction Random endo-hydrolysis of N-acetyl-beta-D-glucosaminide (1-&gt;4)-beta-linkages in chitin and chitodextrins.. Functionally, may play a role in defense against fungal pathogens containing chitin. In Oryza sativa subsp. japonica (Rice), this protein is Chitinase 9 (Cht9).